Consider the following 147-residue polypeptide: Large ribosomal subunit protein uL15 (147 aa).

The interval methionine 1 to proline 62 is disordered. Composition is skewed to gly residues over residues arginine 21–serine 31 and alanine 42–glycine 52.

Belongs to the universal ribosomal protein uL15 family. Part of the 50S ribosomal subunit.

In terms of biological role, binds to the 23S rRNA. The chain is Large ribosomal subunit protein uL15 from Desulfitobacterium hafniense (strain DSM 10664 / DCB-2).